The following is a 343-amino-acid chain: Holliday junction branch migration complex subunit RuvB (343 aa).

A large ATPase domain (RuvB-L) region spans residues 4-193 (TDNLTAAQPQ…FGIVSRLEFY (190 aa)). ATP is bound by residues Leu32, Arg33, Gly74, Lys77, Thr78, Thr79, 140-142 (EDY), Arg183, Tyr193, and Arg230. Residue Thr78 coordinates Mg(2+). Residues 194–264 (ENRDLTTIVS…IADAALSMLD (71 aa)) form a small ATPAse domain (RuvB-S) region. The segment at 267–343 (AQGLDVMDRK…YLHFGLPVEK (77 aa)) is head domain (RuvB-H). Residues Arg322 and Arg327 each contribute to the DNA site.

This sequence belongs to the RuvB family. As to quaternary structure, homohexamer. Forms an RuvA(8)-RuvB(12)-Holliday junction (HJ) complex. HJ DNA is sandwiched between 2 RuvA tetramers; dsDNA enters through RuvA and exits via RuvB. An RuvB hexamer assembles on each DNA strand where it exits the tetramer. Each RuvB hexamer is contacted by two RuvA subunits (via domain III) on 2 adjacent RuvB subunits; this complex drives branch migration. In the full resolvosome a probable DNA-RuvA(4)-RuvB(12)-RuvC(2) complex forms which resolves the HJ.

It is found in the cytoplasm. It catalyses the reaction ATP + H2O = ADP + phosphate + H(+). Its function is as follows. The RuvA-RuvB-RuvC complex processes Holliday junction (HJ) DNA during genetic recombination and DNA repair, while the RuvA-RuvB complex plays an important role in the rescue of blocked DNA replication forks via replication fork reversal (RFR). RuvA specifically binds to HJ cruciform DNA, conferring on it an open structure. The RuvB hexamer acts as an ATP-dependent pump, pulling dsDNA into and through the RuvAB complex. RuvB forms 2 homohexamers on either side of HJ DNA bound by 1 or 2 RuvA tetramers; 4 subunits per hexamer contact DNA at a time. Coordinated motions by a converter formed by DNA-disengaged RuvB subunits stimulates ATP hydrolysis and nucleotide exchange. Immobilization of the converter enables RuvB to convert the ATP-contained energy into a lever motion, pulling 2 nucleotides of DNA out of the RuvA tetramer per ATP hydrolyzed, thus driving DNA branch migration. The RuvB motors rotate together with the DNA substrate, which together with the progressing nucleotide cycle form the mechanistic basis for DNA recombination by continuous HJ branch migration. Branch migration allows RuvC to scan DNA until it finds its consensus sequence, where it cleaves and resolves cruciform DNA. In Neisseria meningitidis serogroup C (strain 053442), this protein is Holliday junction branch migration complex subunit RuvB.